Here is a 134-residue protein sequence, read N- to C-terminus: Profilin-2 (134 aa).

A disulfide bridge connects residues cysteine 13 and cysteine 118. The short motif at 84–100 (AVIRGKKGSGGITIKKT) is the Involved in PIP2 interaction element. Threonine 114 bears the Phosphothreonine mark.

The protein belongs to the profilin family. Phosphorylated by MAP kinases.

The protein localises to the cytoplasm. It is found in the cytoskeleton. This Olea europaea (Common olive) protein is Profilin-2.